The primary structure comprises 120 residues: Large ribosomal subunit protein uL18 (120 aa).

Residues 1–23 (MKLSRKESVRRRHQRVRRKINGT) form a disordered region. Over residues 8–20 (SVRRRHQRVRRKI) the composition is skewed to basic residues.

Belongs to the universal ribosomal protein uL18 family. In terms of assembly, part of the 50S ribosomal subunit; part of the 5S rRNA/L5/L18/L25 subcomplex. Contacts the 5S and 23S rRNAs.

This is one of the proteins that bind and probably mediate the attachment of the 5S RNA into the large ribosomal subunit, where it forms part of the central protuberance. This is Large ribosomal subunit protein uL18 from Microcystis aeruginosa (strain NIES-843 / IAM M-2473).